We begin with the raw amino-acid sequence, 295 residues long: 4-diphosphocytidyl-2-C-methyl-D-erythritol kinase (295 aa).

The active site involves lysine 22. 106 to 116 (PAGGGFGGGSS) lines the ATP pocket. Aspartate 148 is a catalytic residue.

This sequence belongs to the GHMP kinase family. IspE subfamily.

It catalyses the reaction 4-CDP-2-C-methyl-D-erythritol + ATP = 4-CDP-2-C-methyl-D-erythritol 2-phosphate + ADP + H(+). It functions in the pathway isoprenoid biosynthesis; isopentenyl diphosphate biosynthesis via DXP pathway; isopentenyl diphosphate from 1-deoxy-D-xylulose 5-phosphate: step 3/6. Catalyzes the phosphorylation of the position 2 hydroxy group of 4-diphosphocytidyl-2C-methyl-D-erythritol. The protein is 4-diphosphocytidyl-2-C-methyl-D-erythritol kinase of Xanthomonas oryzae pv. oryzae (strain MAFF 311018).